The chain runs to 559 residues: Sulfite reductase [NADPH] hemoprotein beta-component (559 aa).

C423, C429, C468, and C472 together coordinate [4Fe-4S] cluster. C472 is a siroheme binding site.

Belongs to the nitrite and sulfite reductase 4Fe-4S domain family. Alpha(8)-beta(8). The alpha component is a flavoprotein, the beta component is a hemoprotein. Requires siroheme as cofactor. It depends on [4Fe-4S] cluster as a cofactor.

The catalysed reaction is hydrogen sulfide + 3 NADP(+) + 3 H2O = sulfite + 3 NADPH + 4 H(+). It participates in sulfur metabolism; hydrogen sulfide biosynthesis; hydrogen sulfide from sulfite (NADPH route): step 1/1. In terms of biological role, component of the sulfite reductase complex that catalyzes the 6-electron reduction of sulfite to sulfide. This is one of several activities required for the biosynthesis of L-cysteine from sulfate. This chain is Sulfite reductase [NADPH] hemoprotein beta-component, found in Thiocapsa roseopersicina.